A 118-amino-acid polypeptide reads, in one-letter code: Large ribosomal subunit protein bL19 (118 aa).

The protein belongs to the bacterial ribosomal protein bL19 family.

Its function is as follows. This protein is located at the 30S-50S ribosomal subunit interface and may play a role in the structure and function of the aminoacyl-tRNA binding site. The polypeptide is Large ribosomal subunit protein bL19 (Geobacter sulfurreducens (strain ATCC 51573 / DSM 12127 / PCA)).